The sequence spans 25 residues: Putative cytochrome c4 (25 aa).

A disordered region spans residues 1-25 (QEDIEAGKQKSATCTACHGQEGNST). Heme is bound by residues Cys14 and Cys17.

Post-translationally, binds 2 heme groups per subunit.

It localises to the periplasm. Functionally, diheme, high potential cytochrome c believed to be an intermediate electron donor to terminal oxidation systems. In Aliivibrio fischeri (Vibrio fischeri), this protein is Putative cytochrome c4.